Here is a 418-residue protein sequence, read N- to C-terminus: Tyrosine--tRNA ligase (418 aa).

Position 34 (Tyr-34) interacts with L-tyrosine. A 'HIGH' region motif is present at residues 39-48; that stretch reads PTADSLHLGH. Residues Tyr-169 and Gln-173 each contribute to the L-tyrosine site. The 'KMSKS' region motif lies at 229–233; it reads KFGKS. ATP is bound at residue Lys-232. One can recognise an S4 RNA-binding domain in the interval 352 to 418; that stretch reads LNIVELLVNA…GKKKNFVLTY (67 aa).

Belongs to the class-I aminoacyl-tRNA synthetase family. TyrS type 1 subfamily. As to quaternary structure, homodimer.

It localises to the cytoplasm. It catalyses the reaction tRNA(Tyr) + L-tyrosine + ATP = L-tyrosyl-tRNA(Tyr) + AMP + diphosphate + H(+). Its function is as follows. Catalyzes the attachment of tyrosine to tRNA(Tyr) in a two-step reaction: tyrosine is first activated by ATP to form Tyr-AMP and then transferred to the acceptor end of tRNA(Tyr). The polypeptide is Tyrosine--tRNA ligase (Streptococcus thermophilus (strain ATCC BAA-491 / LMD-9)).